A 518-amino-acid polypeptide reads, in one-letter code: Glutamate--cysteine ligase (518 aa).

It belongs to the glutamate--cysteine ligase type 1 family. Type 1 subfamily.

The catalysed reaction is L-cysteine + L-glutamate + ATP = gamma-L-glutamyl-L-cysteine + ADP + phosphate + H(+). It participates in sulfur metabolism; glutathione biosynthesis; glutathione from L-cysteine and L-glutamate: step 1/2. This chain is Glutamate--cysteine ligase, found in Escherichia coli O157:H7.